A 237-amino-acid chain; its full sequence is Trypsin-1 (237 aa).

Residues 1–237 (IVGGTDAVLG…HVDWIKANAV (237 aa)) enclose the Peptidase S1 domain. An intrachain disulfide couples Cys-30 to Cys-46. His-45 functions as the Charge relay system in the catalytic mechanism. 3 residues coordinate Ca(2+): Glu-64, Val-69, and Glu-74. Asp-96 (charge relay system) is an active-site residue. Cystine bridges form between Cys-159–Cys-174 and Cys-185–Cys-213. Ser-189 functions as the Charge relay system in the catalytic mechanism.

Belongs to the peptidase S1 family. It depends on Ca(2+) as a cofactor.

It is found in the secreted. It localises to the extracellular space. It carries out the reaction Preferential cleavage: Arg-|-Xaa, Lys-|-Xaa.. This is Trypsin-1 from Astacus astacus (Noble crayfish).